We begin with the raw amino-acid sequence, 146 residues long: Phospholipase A2, membrane associated (146 aa).

A signal peptide spans 1-21 (MKVLLLLAVVIMAFGSIQVQG). 7 disulfide bridges follow: C47–C139, C49–C65, C64–C119, C70–C146, C71–C112, C80–C105, and C98–C110. Ca(2+) is bound by residues H48, G50, and G52. The active site involves H68. D69 provides a ligand contact to Ca(2+). Residue D113 is part of the active site.

The protein belongs to the phospholipase A2 family. Ca(2+) is required as a cofactor.

It is found in the secreted. The protein resides in the cell membrane. Its subcellular location is the mitochondrion outer membrane. The enzyme catalyses a 1,2-diacyl-sn-glycero-3-phosphoethanolamine + H2O = a 1-acyl-sn-glycero-3-phosphoethanolamine + a fatty acid + H(+). It carries out the reaction 1-hexadecanoyl-2-(9Z-octadecenoyl)-sn-glycero-3-phosphoethanolamine + H2O = 1-hexadecanoyl-sn-glycero-3-phosphoethanolamine + (9Z)-octadecenoate + H(+). It catalyses the reaction 1-hexadecanoyl-2-(9Z,12Z-octadecadienoyl)-sn-glycero-3-phosphoethanolamine + H2O = 1-hexadecanoyl-sn-glycero-3-phosphoethanolamine + (9Z,12Z)-octadecadienoate + H(+). The catalysed reaction is 1-hexadecanoyl-2-(5Z,8Z,11Z,14Z-eicosatetraenoyl)-sn-glycero-3-phosphoethanolamine + H2O = 1-hexadecanoyl-sn-glycero-3-phosphoethanolamine + (5Z,8Z,11Z,14Z)-eicosatetraenoate + H(+). The enzyme catalyses N-hexadecanoyl-1,2-di-(9Z-octadecenoyl)-sn-glycero-3-phosphoethanolamine + H2O = N-hexadecanoyl-1-(9Z-octadecenoyl)-sn-glycero-3-phosphoethanolamine + (9Z)-octadecenoate + H(+). It carries out the reaction 1,2-dihexadecanoyl-sn-glycero-3-phospho-(1'-sn-glycerol) + H2O = 1-hexadecanoyl-sn-glycero-3-phospho-(1'-sn-glycerol) + hexadecanoate + H(+). It catalyses the reaction 1-hexadecanoyl-2-(9Z-octadecenoyl)-sn-glycero-3-phosphoglycerol + H2O = 1-hexadecanoyl-sn-glycero-3-phosphoglycerol + (9Z)-octadecenoate + H(+). The catalysed reaction is 1-hexadecanoyl-2-(9Z-octadecenoyl)-sn-glycero-3-phospho-(1'-sn-glycerol) + H2O = 1-hexadecanoyl-sn-glycero-3-phospho-(1'-sn-glycerol) + (9Z)-octadecenoate + H(+). The enzyme catalyses a 1,2-diacyl-sn-glycero-3-phosphocholine + H2O = a 1-acyl-sn-glycero-3-phosphocholine + a fatty acid + H(+). It carries out the reaction 1,2-dihexadecanoyl-sn-glycero-3-phosphocholine + H2O = 1-hexadecanoyl-sn-glycero-3-phosphocholine + hexadecanoate + H(+). It catalyses the reaction 1-hexadecanoyl-2-(9Z-octadecenoyl)-sn-glycero-3-phosphocholine + H2O = 1-hexadecanoyl-sn-glycero-3-phosphocholine + (9Z)-octadecenoate + H(+). The catalysed reaction is 1-hexadecanoyl-2-(9Z,12Z-octadecadienoyl)-sn-glycero-3-phosphocholine + H2O = (9Z,12Z)-octadecadienoate + 1-hexadecanoyl-sn-glycero-3-phosphocholine + H(+). The enzyme catalyses 1-hexadecanoyl-2-(4Z,7Z,10Z,13Z,16Z,19Z-docosahexaenoyl)-sn-glycero-3-phosphocholine + H2O = (4Z,7Z,10Z,13Z,16Z,19Z)-docosahexaenoate + 1-hexadecanoyl-sn-glycero-3-phosphocholine + H(+). Functionally, secretory calcium-dependent phospholipase A2 that primarily targets extracellular phospholipids with implications in host antimicrobial defense, inflammatory response and tissue regeneration. Hydrolyzes the ester bond of the fatty acyl group attached at sn-2 position of phospholipids (phospholipase A2 activity) with preference for phosphatidylethanolamines and phosphatidylglycerols over phosphatidylcholines. Contributes to lipid remodeling of cellular membranes and generation of lipid mediators involved in pathogen clearance. Displays bactericidal activity against Gram-positive bacteria by directly hydrolyzing phospholipids of the bacterial membrane. Upon sterile inflammation, targets membrane phospholipids of extracellular mitochondria released from activated platelets, generating free unsaturated fatty acids such as arachidonate that is used by neighboring leukocytes to synthesize inflammatory eicosanoids such as leukotrienes. Simultaneously, by compromising mitochondrial membrane integrity, promotes the release in circulation of potent damage-associated molecular pattern molecules that activate the innate immune response. Plays a stem cell regulator role in the intestinal crypt. Within intracellular compartment mediates Paneth cell differentiation and its stem cell supporting functions by inhibiting Wnt signaling pathway in intestinal stem cell (ICS). Secreted in the intestinal lumen upon inflammation, acts in an autocrine way and promotes prostaglandin E2 synthesis that stimulates Wnt signaling pathway in ICS cells and tissue regeneration. May play a role in the biosynthesis of N-acyl ethanolamines that regulate energy metabolism and inflammation. Hydrolyzes N-acyl phosphatidylethanolamines to N-acyl lysophosphatidylethanolamines, which are further cleaved by a lysophospholipase D to release N-acyl ethanolamines. Independent of its catalytic activity, acts as a ligand for integrins. Binds to and activates integrins ITGAV:ITGB3, ITGA4:ITGB1 and ITGA5:ITGB1. Binds to a site (site 2) which is distinct from the classical ligand-binding site (site 1) and induces integrin conformational changes and enhanced ligand binding to site 1. Induces cell proliferation in an integrin-dependent manner. The sequence is that of Phospholipase A2, membrane associated (Pla2g2a) from Rattus norvegicus (Rat).